We begin with the raw amino-acid sequence, 362 residues long: S-adenosylmethionine:tRNA ribosyltransferase-isomerase (362 aa).

Belongs to the QueA family. As to quaternary structure, monomer.

The protein resides in the cytoplasm. It catalyses the reaction 7-aminomethyl-7-carbaguanosine(34) in tRNA + S-adenosyl-L-methionine = epoxyqueuosine(34) in tRNA + adenine + L-methionine + 2 H(+). It functions in the pathway tRNA modification; tRNA-queuosine biosynthesis. Transfers and isomerizes the ribose moiety from AdoMet to the 7-aminomethyl group of 7-deazaguanine (preQ1-tRNA) to give epoxyqueuosine (oQ-tRNA). The chain is S-adenosylmethionine:tRNA ribosyltransferase-isomerase from Syntrophus aciditrophicus (strain SB).